A 181-amino-acid chain; its full sequence is Large ribosomal subunit protein uL5 (181 aa).

Belongs to the universal ribosomal protein uL5 family. Part of the 50S ribosomal subunit; part of the 5S rRNA/L5/L18/L25 subcomplex. Contacts the 5S rRNA and the P site tRNA. Forms a bridge to the 30S subunit in the 70S ribosome.

This is one of the proteins that bind and probably mediate the attachment of the 5S RNA into the large ribosomal subunit, where it forms part of the central protuberance. In the 70S ribosome it contacts protein S13 of the 30S subunit (bridge B1b), connecting the 2 subunits; this bridge is implicated in subunit movement. Contacts the P site tRNA; the 5S rRNA and some of its associated proteins might help stabilize positioning of ribosome-bound tRNAs. The polypeptide is Large ribosomal subunit protein uL5 (Helicobacter pylori (strain J99 / ATCC 700824) (Campylobacter pylori J99)).